The sequence spans 354 residues: tRNase Z TRZ2, chloroplastic (354 aa).

Residues 1-21 are disordered; it reads MQLSSSFPISPPKIFPSTKHH. Residues 1–68 constitute a chloroplast transit peptide; it reads MQLSSSFPIS…EEEEEYRKAR (68 aa).

The protein belongs to the RNase Z family. In terms of assembly, homodimer. Zn(2+) is required as a cofactor. It depends on Ca(2+) as a cofactor. The cofactor is Mn(2+). Mg(2+) serves as cofactor. As to expression, highly expressed in green and actively dividing tissues.

The protein localises to the plastid. The protein resides in the chloroplast. It carries out the reaction Endonucleolytic cleavage of RNA, removing extra 3' nucleotides from tRNA precursor, generating 3' termini of tRNAs. A 3'-hydroxy group is left at the tRNA terminus and a 5'-phosphoryl group is left at the trailer molecule.. Functionally, zinc phosphodiesterase, which displays tRNA 3'-processing endonuclease activity. Involved in tRNA maturation, by removing a 3'-trailer from precursor tRNA. This chain is tRNase Z TRZ2, chloroplastic, found in Arabidopsis thaliana (Mouse-ear cress).